A 132-amino-acid polypeptide reads, in one-letter code: Small ribosomal subunit protein uS8c (132 aa).

This sequence belongs to the universal ribosomal protein uS8 family. Part of the 30S ribosomal subunit.

Its subcellular location is the plastid. The protein localises to the chloroplast. Its function is as follows. One of the primary rRNA binding proteins, it binds directly to 16S rRNA central domain where it helps coordinate assembly of the platform of the 30S subunit. The sequence is that of Small ribosomal subunit protein uS8c (rps8) from Spirogyra maxima (Green alga).